A 251-amino-acid polypeptide reads, in one-letter code: Flap endonuclease Xni (251 aa).

Residue aspartate 104 participates in Mg(2+) binding. The 5'-3' exonuclease domain occupies 160 to 250 (VQPQQLPDYW…DGNLQQLRLK (91 aa)). The K(+) site is built by leucine 171, alanine 172, proline 180, valine 182, and isoleucine 185. Positions 184–189 (GIGPKS) are interaction with DNA.

It belongs to the Xni family. It depends on Mg(2+) as a cofactor. The cofactor is K(+).

Functionally, has flap endonuclease activity. During DNA replication, flap endonucleases cleave the 5'-overhanging flap structure that is generated by displacement synthesis when DNA polymerase encounters the 5'-end of a downstream Okazaki fragment. The polypeptide is Flap endonuclease Xni (Escherichia fergusonii (strain ATCC 35469 / DSM 13698 / CCUG 18766 / IAM 14443 / JCM 21226 / LMG 7866 / NBRC 102419 / NCTC 12128 / CDC 0568-73)).